The primary structure comprises 243 residues: Probable transcriptional regulatory protein BH0025 (243 aa).

This sequence belongs to the TACO1 family.

The protein resides in the cytoplasm. In Borrelia hermsii (strain HS1 / DAH), this protein is Probable transcriptional regulatory protein BH0025.